A 1131-amino-acid chain; its full sequence is Phytochrome a (1131 aa).

Residues 1–23 (MSSSRPAHSSSSSSRTRQSSQAR) are compositionally biased toward low complexity. Residues 1–26 (MSSSRPAHSSSSSSRTRQSSQARILA) are disordered. A GAF domain is found at 219–404 (SMEALCNTVV…VFAVHVNKEF (186 aa)). Cysteine 324 is a binding site for phytochromobilin. PAS domains follow at residues 620 to 690 (VTSE…LQGK) and 750 to 834 (VEGD…LAGE). Residues 904–1124 (YMRHAINKPL…TFILTAELAA (221 aa)) enclose the Histidine kinase domain.

This sequence belongs to the phytochrome family. Homodimer. In terms of processing, contains one covalently linked phytochromobilin chromophore.

Functionally, regulatory photoreceptor which exists in two forms that are reversibly interconvertible by light: the Pr form that absorbs maximally in the red region of the spectrum and the Pfr form that absorbs maximally in the far-red region. Photoconversion of Pr to Pfr induces an array of morphogenic responses, whereas reconversion of Pfr to Pr cancels the induction of those responses. Pfr controls the expression of a number of nuclear genes including those encoding the small subunit of ribulose-bisphosphate carboxylase, chlorophyll A/B binding protein, protochlorophyllide reductase, rRNA, etc. It also controls the expression of its own gene(s) in a negative feedback fashion. In Sorghum bicolor (Sorghum), this protein is Phytochrome a (PHYA).